A 409-amino-acid polypeptide reads, in one-letter code: Tyrosine--tRNA ligase (409 aa).

The 'HIGH' region motif lies at 54–63 (PTAPDIHLGH). The 'KMSKS' region motif lies at 238 to 242 (KMSKS). Position 241 (Lys-241) interacts with ATP. The S4 RNA-binding domain occupies 347-407 (MGILHVLRAS…GKRKFARVNL (61 aa)).

This sequence belongs to the class-I aminoacyl-tRNA synthetase family. TyrS type 2 subfamily. Homodimer.

It is found in the cytoplasm. It carries out the reaction tRNA(Tyr) + L-tyrosine + ATP = L-tyrosyl-tRNA(Tyr) + AMP + diphosphate + H(+). Its function is as follows. Catalyzes the attachment of tyrosine to tRNA(Tyr) in a two-step reaction: tyrosine is first activated by ATP to form Tyr-AMP and then transferred to the acceptor end of tRNA(Tyr). This chain is Tyrosine--tRNA ligase, found in Bordetella avium (strain 197N).